Here is an 864-residue protein sequence, read N- to C-terminus: Probable LRR receptor-like serine/threonine-protein kinase At1g07550 (864 aa).

A signal peptide spans 1–23; it reads MDTCTRLLFAACATLSILHLVQS. The Extracellular portion of the chain corresponds to 24–507; sequence QNQQGFISLD…SCGTRFPTAA (484 aa). N-linked (GlcNAc...) asparagine glycans are attached at residues asparagine 49, asparagine 229, asparagine 256, asparagine 289, asparagine 432, asparagine 445, and asparagine 464. LRR repeat units lie at residues 411-434, 435-457, and 459-480; these read RIVK…QNLT, QLQE…LAKM, and YLLV…ALLD. A helical transmembrane segment spans residues 508–528; the sequence is VAASVSAVAIIILVLVLIFVL. Residues 529-864 lie on the Cytoplasmic side of the membrane; that stretch reads RRRKPSAGKV…VDTEINPKAR (336 aa). Threonine 551 bears the Phosphothreonine mark. Residues 560–831 enclose the Protein kinase domain; the sequence is NNFQVVIGKG…QVVHVLNECL (272 aa). Residues 566–574 and lysine 587 each bind ATP; that span reads IGKGGFGVV. Tyrosine 632 bears the Phosphotyrosine mark. Aspartate 684 functions as the Proton acceptor in the catalytic mechanism. Phosphothreonine is present on residues threonine 718 and threonine 723. Position 731 is a phosphotyrosine (tyrosine 731).

Belongs to the protein kinase superfamily. Ser/Thr protein kinase family.

The protein resides in the membrane. The enzyme catalyses L-seryl-[protein] + ATP = O-phospho-L-seryl-[protein] + ADP + H(+). The catalysed reaction is L-threonyl-[protein] + ATP = O-phospho-L-threonyl-[protein] + ADP + H(+). This chain is Probable LRR receptor-like serine/threonine-protein kinase At1g07550, found in Arabidopsis thaliana (Mouse-ear cress).